The chain runs to 705 residues: Elongation factor G (705 aa).

The 287-residue stretch at 8–294 (DRYRNFGIMA…AVIDYLPSPL (287 aa)) folds into the tr-type G domain. Residues 17–24 (AHIDAGKT), 92–96 (DTPGH), and 146–149 (NKMD) contribute to the GTP site.

This sequence belongs to the TRAFAC class translation factor GTPase superfamily. Classic translation factor GTPase family. EF-G/EF-2 subfamily.

Its subcellular location is the cytoplasm. In terms of biological role, catalyzes the GTP-dependent ribosomal translocation step during translation elongation. During this step, the ribosome changes from the pre-translocational (PRE) to the post-translocational (POST) state as the newly formed A-site-bound peptidyl-tRNA and P-site-bound deacylated tRNA move to the P and E sites, respectively. Catalyzes the coordinated movement of the two tRNA molecules, the mRNA and conformational changes in the ribosome. The sequence is that of Elongation factor G from Dinoroseobacter shibae (strain DSM 16493 / NCIMB 14021 / DFL 12).